Here is a 260-residue protein sequence, read N- to C-terminus: uncharacterized protein (260 aa).

The Radical SAM core domain maps to 6–239; the sequence is AGVRSGVVVS…VAVAETYLPN (234 aa).

This is an uncharacterized protein from Sinorhizobium fredii (strain NBRC 101917 / NGR234).